A 292-amino-acid chain; its full sequence is Malonyl-S-ACP:biotin-protein carboxyltransferase MADD (292 aa).

One can recognise a CoA carboxyltransferase C-terminal domain in the interval 1 to 281 (MEIMMGQGRL…RGKVMAMMDK (281 aa)).

The protein localises to the cytoplasm. It catalyses the reaction N(6)-biotinyl-L-lysyl-[protein] + malonyl-[ACP] = N(6)-carboxybiotinyl-L-lysyl-[protein] + acetyl-[ACP]. Gamma subunit of the biotin-dependent malonate decarboxylase multienzyme complex (EC 7.2.4.4). The two subunits MADC and MADD are required for the transfer of the malonate carboxy group from the acyl-carrier protein (ACP) to the prosthetic group of the biotin carrier MADF. Required for the regeneration of ACP. The polypeptide is Malonyl-S-ACP:biotin-protein carboxyltransferase MADD (madD) (Malonomonas rubra).